The sequence spans 428 residues: C4-dicarboxylate transport protein (428 aa).

Transmembrane regions (helical) follow at residues 8 to 28 (SLYF…HFYP), 44 to 64 (LIKM…IAGM), 76 to 96 (VALL…LIIV), 142 to 162 (IGAF…LFGF), 184 to 206 (VIFG…AMAF), 222 to 242 (LIIC…GSIA), 326 to 346 (IVHQ…AAGV), and 352 to 372 (IVLA…LALI).

This sequence belongs to the dicarboxylate/amino acid:cation symporter (DAACS) (TC 2.A.23) family.

Its subcellular location is the cell inner membrane. Its function is as follows. Responsible for the transport of dicarboxylates such as succinate, fumarate, and malate from the periplasm across the membrane. The protein is C4-dicarboxylate transport protein of Shigella flexneri.